The following is a 547-amino-acid chain: Flagellar hook-associated protein 1 (547 aa).

This sequence belongs to the flagella basal body rod proteins family.

The protein localises to the secreted. The protein resides in the bacterial flagellum. The chain is Flagellar hook-associated protein 1 (flgK) from Escherichia coli (strain K12).